Reading from the N-terminus, the 424-residue chain is Serine hydroxymethyltransferase 1 (424 aa).

(6S)-5,6,7,8-tetrahydrofolate is bound by residues Leu-125 and 129-131; that span reads GHL. Lys-234 carries the post-translational modification N6-(pyridoxal phosphate)lysine.

Belongs to the SHMT family. Homodimer. Pyridoxal 5'-phosphate is required as a cofactor.

Its subcellular location is the cytoplasm. It carries out the reaction (6R)-5,10-methylene-5,6,7,8-tetrahydrofolate + glycine + H2O = (6S)-5,6,7,8-tetrahydrofolate + L-serine. The protein operates within one-carbon metabolism; tetrahydrofolate interconversion. It participates in amino-acid biosynthesis; glycine biosynthesis; glycine from L-serine: step 1/1. Functionally, catalyzes the reversible interconversion of serine and glycine with tetrahydrofolate (THF) serving as the one-carbon carrier. This reaction serves as the major source of one-carbon groups required for the biosynthesis of purines, thymidylate, methionine, and other important biomolecules. Also exhibits THF-independent aldolase activity toward beta-hydroxyamino acids, producing glycine and aldehydes, via a retro-aldol mechanism. In Burkholderia lata (strain ATCC 17760 / DSM 23089 / LMG 22485 / NCIMB 9086 / R18194 / 383), this protein is Serine hydroxymethyltransferase 1.